Consider the following 41-residue polypeptide: Divisome-associated membrane protein Blr (41 aa).

Residues Met-1–Arg-3 are Cytoplasmic-facing. The chain crosses the membrane as a helical span at residues Leu-4–Ser-24. Residues His-25–Lys-41 are Periplasmic-facing.

As to quaternary structure, interacts with FtsL and several other divisomal proteins, including FtsI, FtsK, FtsN, FtsQ, FtsW and YmgF. The N-terminus is blocked.

The protein localises to the cell inner membrane. Functionally, component of the cell division machinery, which is probably involved in the stabilization of the divisome under certain stress conditions. The chain is Divisome-associated membrane protein Blr (blr) from Escherichia coli (strain K12).